The chain runs to 915 residues: Alanine--tRNA ligase (915 aa).

The Zn(2+) site is built by H605, H609, C709, and H713. The interval 882 to 901 (GGGGDERLAQGGGRNPDGLT) is disordered.

This sequence belongs to the class-II aminoacyl-tRNA synthetase family. It depends on Zn(2+) as a cofactor.

Its subcellular location is the cytoplasm. It carries out the reaction tRNA(Ala) + L-alanine + ATP = L-alanyl-tRNA(Ala) + AMP + diphosphate. Its function is as follows. Catalyzes the attachment of alanine to tRNA(Ala) in a two-step reaction: alanine is first activated by ATP to form Ala-AMP and then transferred to the acceptor end of tRNA(Ala). Also edits incorrectly charged Ser-tRNA(Ala) and Gly-tRNA(Ala) via its editing domain. The protein is Alanine--tRNA ligase of Methanopyrus kandleri (strain AV19 / DSM 6324 / JCM 9639 / NBRC 100938).